The chain runs to 797 residues: RAS guanyl-releasing protein 1 (797 aa).

The segment covering M1 to R12 has biased composition (basic and acidic residues). Residues M1–K23 are disordered. Positions L53 to A176 constitute an N-terminal Ras-GEF domain. Residues A57–Y110 form a ras exchanger motif region; required for transforming activity region. Position 184 is a phosphothreonine; by PKC (T184). Positions E205 to R436 constitute a Ras-GEF domain. EF-hand domains are found at residues H470–S505 and F506–I532. Residues D483, D485, D487, Y489, and E494 each contribute to the Ca(2+) site. The Phorbol-ester/DAG-type zinc-finger motif lies at P541–C591. The tract at residues T673–S694 is disordered. Residues P686–S694 are suppress the PT region-mediated translocation to plasma membrane. The PT region; mediates the BCR-dependent translocation to plasma membrane stretch occupies residues L718–S797. Residues P746–H786 adopt a coiled-coil conformation.

Belongs to the RASGRP family. In terms of assembly, homodimer. Forms a signaling complex with DGKZ and HRAS. Interacts with F-actin. Interacts with SKAP1. As to expression, expressed in brain with higher expression in cerebellum, cerebral cortex and amygdala. Expressed in the hematopoietic system. Expressed in T-cells (at protein level). Expressed in NK cells (at protein level).

It localises to the cytoplasm. The protein localises to the cytosol. It is found in the cell membrane. Its subcellular location is the golgi apparatus membrane. The protein resides in the endoplasmic reticulum membrane. Its activity is regulated as follows. Autoinhibited. Activated by diacylglycerol and calcium binding, which induces a conformational change releasing the autoinhibitory state. Regulated by DGKA. Regulated by DGKZ. Regulated by PLC gamma and F-actin polymerization. Functionally, functions as a calcium- and diacylglycerol (DAG)-regulated nucleotide exchange factor specifically activating Ras through the exchange of bound GDP for GTP. Activates the Erk/MAP kinase cascade. Regulates T-cell/B-cell development, homeostasis and differentiation by coupling T-lymphocyte/B-lymphocyte antigen receptors to Ras. Regulates NK cell cytotoxicity and ITAM-dependent cytokine production by activation of Ras-mediated ERK and JNK pathways. Functions in mast cell degranulation and cytokine secretion, regulating FcERI-evoked allergic responses. May also function in differentiation of other cell types. The protein is RAS guanyl-releasing protein 1 (RASGRP1) of Homo sapiens (Human).